The chain runs to 997 residues: Bifunctional purine synthesis protein purC/E (997 aa).

An SAICAR synthetase region spans residues M1–S305. Composition is skewed to low complexity over residues L294–N323, Q342–S355, and T524–S536. Disordered stretches follow at residues L294–S355, I518–A538, I550–T569, and P575–I604. The interval S305–Q997 is AIR carboxylase. A compositionally biased stretch (low complexity) spans P575–S597. ATP contacts are provided by residues R728, K768, Q779, E807 to I810, and E815. An ATP-grasp domain is found at K732–C927. Mg(2+) contacts are provided by E880 and E898. N897–E898 is a binding site for ATP.

The protein in the N-terminal section; belongs to the SAICAR synthetase family. It in the C-terminal section; belongs to the AIR carboxylase family. Class I subfamily. It depends on Mg(2+) as a cofactor. Mn(2+) serves as cofactor.

It carries out the reaction 5-amino-1-(5-phospho-D-ribosyl)imidazole-4-carboxylate + L-aspartate + ATP = (2S)-2-[5-amino-1-(5-phospho-beta-D-ribosyl)imidazole-4-carboxamido]succinate + ADP + phosphate + 2 H(+). The enzyme catalyses 5-amino-1-(5-phospho-D-ribosyl)imidazole-4-carboxylate + H(+) = 5-amino-1-(5-phospho-beta-D-ribosyl)imidazole + CO2. It functions in the pathway purine metabolism; IMP biosynthesis via de novo pathway; 5-amino-1-(5-phospho-D-ribosyl)imidazole-4-carboxylate from 5-amino-1-(5-phospho-D-ribosyl)imidazole (carboxylase route): step 1/1. The protein operates within purine metabolism; IMP biosynthesis via de novo pathway; 5-amino-1-(5-phospho-D-ribosyl)imidazole-4-carboxamide from 5-amino-1-(5-phospho-D-ribosyl)imidazole-4-carboxylate: step 1/2. Functionally, bifunctional enzyme involved in de novo IMP synthesis, an essential step for de nove purine synthesis. The protein is Bifunctional purine synthesis protein purC/E (purC/E) of Dictyostelium discoideum (Social amoeba).